Here is a 95-residue protein sequence, read N- to C-terminus: Co-chaperonin GroES (95 aa).

This sequence belongs to the GroES chaperonin family. Heptamer of 7 subunits arranged in a ring. Interacts with the chaperonin GroEL.

It is found in the cytoplasm. Functionally, together with the chaperonin GroEL, plays an essential role in assisting protein folding. The GroEL-GroES system forms a nano-cage that allows encapsulation of the non-native substrate proteins and provides a physical environment optimized to promote and accelerate protein folding. GroES binds to the apical surface of the GroEL ring, thereby capping the opening of the GroEL channel. The polypeptide is Co-chaperonin GroES (Desulfatibacillum aliphaticivorans).